The sequence spans 553 residues: Zinc finger CCHC domain-containing protein 8 homolog (553 aa).

Residue Ser59 is modified to Phosphoserine. A CCHC-type zinc finger spans residues 183–200 (SSCFNCGDTEHSLRDCTK). Residues Ser292 and Ser347 each carry the phosphoserine modification. Tyr356 is subject to Phosphotyrosine. The segment at 388 to 492 (LEEETEDPPL…APSTPFKASY (105 aa)) is disordered. Residues 395–409 (PPLPPSVPPPQPPPP) show a composition bias toward pro residues. Residues Ser421 and Ser423 each carry the phosphoserine modification. Composition is skewed to polar residues over residues 444 to 456 (ASHN…SKSP) and 473 to 485 (ESGN…SAPS).

The protein belongs to the ZCCHC8 family.

It localises to the nucleus. The protein localises to the nucleoplasm. In terms of biological role, scaffolding subunit of the trimeric nuclear exosome targeting (NEXT) complex, a complex that directs a subset of non-coding short-lived RNAs for exosomal degradation. The RNA exosome is fundamental for the degradation of RNA in eukaryotic nuclei. May be involved in pre-mRNA splicing. The sequence is that of Zinc finger CCHC domain-containing protein 8 homolog from Drosophila melanogaster (Fruit fly).